A 434-amino-acid polypeptide reads, in one-letter code: 3-ketoacyl-CoA thiolase A, peroxisomal (434 aa).

The N-terminal 36 residues, 1–36, are a transit peptide targeting the peroxisome; sequence MSESVGRTSAMHRLQVVLGHLAGRPESSSALQAAPC. Residues 11–36 are PTS2-type peroxisomal targeting signal; the sequence is MHRLQVVLGHLAGRPESSSALQAAPC. The active-site Acyl-thioester intermediate is Cys133. N6-acetyllysine occurs at positions 183 and 244. Catalysis depends on proton acceptor residues His387 and Cys418.

This sequence belongs to the thiolase-like superfamily. Thiolase family. As to quaternary structure, homodimer. Interacts (via PTS2-type peroxisomal targeting signal region) with PEX7; leading to its translocation into peroxisomes.

It is found in the peroxisome. The catalysed reaction is an acyl-CoA + acetyl-CoA = a 3-oxoacyl-CoA + CoA. It catalyses the reaction 2 acetyl-CoA = acetoacetyl-CoA + CoA. It carries out the reaction tetradecanoyl-CoA + acetyl-CoA = 3-oxohexadecanoyl-CoA + CoA. The enzyme catalyses hexanoyl-CoA + acetyl-CoA = 3-oxooctanoyl-CoA + CoA. The catalysed reaction is 3-oxohexadecanedioyl-CoA + CoA = tetradecanedioyl-CoA + acetyl-CoA. It catalyses the reaction 3-oxo-(6Z,9Z,12Z,15Z,18Z,21Z)-tetracosahexaenoyl-CoA + CoA = (4Z,7Z,10Z,13Z,16Z,19Z)-docosahexaenoyl-CoA + acetyl-CoA. It functions in the pathway lipid metabolism; peroxisomal fatty acid beta-oxidation. Responsible for the thiolytic cleavage of straight chain 3-keto fatty acyl-CoAs (3-oxoacyl-CoAs). Plays an important role in fatty acid peroxisomal beta-oxidation. Catalyzes the cleavage of short, medium, long, and very long straight chain 3-oxoacyl-CoAs. Medium chain straight 3-oxoacyl-CoAs are preferred substrates. The protein is 3-ketoacyl-CoA thiolase A, peroxisomal of Rattus norvegicus (Rat).